A 492-amino-acid chain; its full sequence is Probable cytochrome P450 310a1 (492 aa).

Cys428 contributes to the heme binding site.

The protein belongs to the cytochrome P450 family. Heme serves as cofactor.

The protein resides in the endoplasmic reticulum membrane. Its subcellular location is the microsome membrane. In terms of biological role, may be involved in the metabolism of insect hormones and in the breakdown of synthetic insecticides. This chain is Probable cytochrome P450 310a1 (Cyp310a1), found in Drosophila melanogaster (Fruit fly).